A 616-amino-acid chain; its full sequence is Chaperone protein HscA (616 aa).

Belongs to the heat shock protein 70 family.

In terms of biological role, chaperone involved in the maturation of iron-sulfur cluster-containing proteins. Has a low intrinsic ATPase activity which is markedly stimulated by HscB. Involved in the maturation of IscU. The protein is Chaperone protein HscA of Shigella flexneri serotype 5b (strain 8401).